The following is a 356-amino-acid chain: uncharacterized protein (356 aa).

The N-terminal stretch at 1-21 (MHWSRFVGIFLVFSVFSLVNC) is a signal peptide. Positions 293-317 (RPETDYEGANLPNIPSKKGSANQPV) are disordered.

This is an uncharacterized protein from Acanthamoeba polyphaga mimivirus (APMV).